We begin with the raw amino-acid sequence, 417 residues long: Serpin H1 (417 aa).

An N-terminal signal peptide occupies residues 1–17 (MRSLLLGTLCLLAVALA). At Lys-93 the chain carries N6-succinyllysine. 2 N-linked (GlcNAc...) asparagine glycosylation sites follow: Asn-119 and Asn-124. Ser-140 is modified (phosphoserine). Residue Lys-206 is modified to N6-acetyllysine. Lys-295 is subject to N6-succinyllysine. Lys-318 is modified (N6-acetyllysine). N-linked (GlcNAc...) asparagine glycosylation is present at Asn-394. A Prevents secretion from ER motif is present at residues 414 to 417 (RDEL).

The protein belongs to the serpin family.

The protein resides in the endoplasmic reticulum lumen. Its function is as follows. Binds specifically to collagen. Could be involved as a chaperone in the biosynthetic pathway of collagen. The polypeptide is Serpin H1 (Serpinh1) (Mus musculus (Mouse)).